The chain runs to 291 residues: Nucleotide-binding protein lmo2474 (291 aa).

13 to 20 (GMSGAGKT) serves as a coordination point for ATP. 63-66 (DLRG) serves as a coordination point for GTP.

Belongs to the RapZ-like family.

In terms of biological role, displays ATPase and GTPase activities. This is Nucleotide-binding protein lmo2474 from Listeria monocytogenes serovar 1/2a (strain ATCC BAA-679 / EGD-e).